A 300-amino-acid polypeptide reads, in one-letter code: Sulfate adenylyltransferase subunit 2 (300 aa).

The protein belongs to the PAPS reductase family. CysD subfamily. As to quaternary structure, heterodimer composed of CysD, the smaller subunit, and CysN.

It catalyses the reaction sulfate + ATP + H(+) = adenosine 5'-phosphosulfate + diphosphate. Its pathway is sulfur metabolism; hydrogen sulfide biosynthesis; sulfite from sulfate: step 1/3. With CysN forms the ATP sulfurylase (ATPS) that catalyzes the adenylation of sulfate producing adenosine 5'-phosphosulfate (APS) and diphosphate, the first enzymatic step in sulfur assimilation pathway. APS synthesis involves the formation of a high-energy phosphoric-sulfuric acid anhydride bond driven by GTP hydrolysis by CysN coupled to ATP hydrolysis by CysD. This Magnetococcus marinus (strain ATCC BAA-1437 / JCM 17883 / MC-1) protein is Sulfate adenylyltransferase subunit 2.